A 269-amino-acid polypeptide reads, in one-letter code: Glutamate racemase (269 aa).

Substrate contacts are provided by residues 13–14 (DS) and 45–46 (YS). The Proton donor/acceptor role is filled by Cys-77. A substrate-binding site is contributed by 78 to 79 (NT). Cys-188 functions as the Proton donor/acceptor in the catalytic mechanism. 189–190 (TH) contacts substrate.

The protein belongs to the aspartate/glutamate racemases family.

The enzyme catalyses L-glutamate = D-glutamate. It functions in the pathway cell wall biogenesis; peptidoglycan biosynthesis. Its function is as follows. Provides the (R)-glutamate required for cell wall biosynthesis. This is Glutamate racemase from Pasteurella multocida (strain Pm70).